Reading from the N-terminus, the 128-residue chain is Ribonuclease P protein component 4 (128 aa).

Cysteine 67, cysteine 70, cysteine 96, and cysteine 99 together coordinate Zn(2+).

It belongs to the eukaryotic/archaeal RNase P protein component 4 family. As to quaternary structure, consists of a catalytic RNA component and at least 4-5 protein subunits. Zn(2+) is required as a cofactor.

It is found in the cytoplasm. The enzyme catalyses Endonucleolytic cleavage of RNA, removing 5'-extranucleotides from tRNA precursor.. Part of ribonuclease P, a protein complex that generates mature tRNA molecules by cleaving their 5'-ends. In Methanopyrus kandleri (strain AV19 / DSM 6324 / JCM 9639 / NBRC 100938), this protein is Ribonuclease P protein component 4.